Reading from the N-terminus, the 482-residue chain is Glutamate--tRNA ligase 2 (482 aa).

The 'HIGH' region motif lies at 16–26 (PSPTGYLHLGN). Cys113, Cys115, Cys140, and His142 together coordinate Zn(2+). A 'KMSKS' region motif is present at residues 257–261 (PLSKR). Lys260 contacts ATP.

Belongs to the class-I aminoacyl-tRNA synthetase family. Glutamate--tRNA ligase type 1 subfamily. In terms of assembly, monomer. It depends on Zn(2+) as a cofactor.

The protein resides in the cytoplasm. The catalysed reaction is tRNA(Glu) + L-glutamate + ATP = L-glutamyl-tRNA(Glu) + AMP + diphosphate. In terms of biological role, catalyzes the attachment of glutamate to tRNA(Glu) in a two-step reaction: glutamate is first activated by ATP to form Glu-AMP and then transferred to the acceptor end of tRNA(Glu). The chain is Glutamate--tRNA ligase 2 from Acidithiobacillus ferrooxidans (strain ATCC 53993 / BNL-5-31) (Leptospirillum ferrooxidans (ATCC 53993)).